A 266-amino-acid chain; its full sequence is Uxu operon regulator (266 aa).

In terms of domain architecture, HTH gntR-type spans 23-91 (NRTYTRIGQL…KGSGVYVVRT (69 aa)). Positions 51 to 70 (EREISEKFGVSRTIVREAMV) form a DNA-binding region, H-T-H motif.

In terms of biological role, repressor for the uxuRBA operon. The polypeptide is Uxu operon regulator (uxuR) (Haemophilus influenzae (strain ATCC 51907 / DSM 11121 / KW20 / Rd)).